A 188-amino-acid chain; its full sequence is Elongation factor P-like protein (188 aa).

Belongs to the elongation factor P family.

This Stenotrophomonas maltophilia (strain K279a) protein is Elongation factor P-like protein.